The sequence spans 339 residues: Ketol-acid reductoisomerase (NADP(+)) (339 aa).

In terms of domain architecture, KARI N-terminal Rossmann spans 1–182 (MRVYYDCDVN…GGGRSGIMKT (182 aa)). NADP(+)-binding positions include 24-27 (YGAQ), Ser51, Thr53, and 83-86 (DELQ). His108 is an active-site residue. Position 134 (Gly134) interacts with NADP(+). In terms of domain architecture, KARI C-terminal knotted spans 183–328 (TFREECETDL…DKIRSMMALT (146 aa)). Mg(2+)-binding residues include Asp191, Glu195, Glu227, and Glu231. Ser252 contributes to the substrate binding site.

The protein belongs to the ketol-acid reductoisomerase family. The cofactor is Mg(2+).

The enzyme catalyses (2R)-2,3-dihydroxy-3-methylbutanoate + NADP(+) = (2S)-2-acetolactate + NADPH + H(+). It catalyses the reaction (2R,3R)-2,3-dihydroxy-3-methylpentanoate + NADP(+) = (S)-2-ethyl-2-hydroxy-3-oxobutanoate + NADPH + H(+). It functions in the pathway amino-acid biosynthesis; L-isoleucine biosynthesis; L-isoleucine from 2-oxobutanoate: step 2/4. Its pathway is amino-acid biosynthesis; L-valine biosynthesis; L-valine from pyruvate: step 2/4. Its function is as follows. Involved in the biosynthesis of branched-chain amino acids (BCAA). Catalyzes an alkyl-migration followed by a ketol-acid reduction of (S)-2-acetolactate (S2AL) to yield (R)-2,3-dihydroxy-isovalerate. In the isomerase reaction, S2AL is rearranged via a Mg-dependent methyl migration to produce 3-hydroxy-3-methyl-2-ketobutyrate (HMKB). In the reductase reaction, this 2-ketoacid undergoes a metal-dependent reduction by NADPH to yield (R)-2,3-dihydroxy-isovalerate. This is Ketol-acid reductoisomerase (NADP(+)) from Bartonella bacilliformis (strain ATCC 35685 / KC583 / Herrer 020/F12,63).